Reading from the N-terminus, the 311-residue chain is CD-NTase-associated protein 6 (311 aa).

ATP is bound by residues 84-89 (GSGKTE) and 215-216 (RR).

Belongs to the AAA ATPase family. In terms of assembly, homohexamer. Forms a 1:1:6 CdnC:Cap7:Cap6 complex.

Functionally, regulates complex assembly in a CBASS antivirus system. CBASS (cyclic oligonucleotide-based antiphage signaling system) provides immunity against bacteriophage. The CD-NTase protein synthesizes cyclic nucleotides in response to infection; these serve as specific second messenger signals. The signals activate a diverse range of effectors, leading to bacterial cell death and thus abortive phage infection. A type III-C(AAA) CBASS system. In terms of biological role, binds and disassembles an active CdnC:Cap7 (Cap7 is also called HORMA) complex, inhibiting the complex's ability to synthesize cyclic nucleotide second messengers. An AAA+-ATPase remodeler, in the absence of foreign threat Cap6 (also called Trip13) probably maintains the Cap7 protein in its open, inactive state. Once activated (presumably by a bacteriophage protein) Cap7 binds to and activates its cognate CD-NTase (CdnC in this bacteria) to synthesize cAAA, a cyclic nucleotide second messenger. cAAA activates the NucC endonuclease which degrades all DNA in the infected cell, causing cell death and abortive phage infection. Protects E.coli strain JP313 against bacteriophage lambda cI- infection. When the cdnC-cap7-cap6-nucC operon is transformed into a susceptible E.coli strain it confers bacteriophage lambda cI- immunity. Mutations in the sensor (Cap7 also called HORMA) or effector proteins (CdnC, NucC) but not the disassembly protein (Cap6 also called Trip13) no longer confer immunity. The presence of the intact operon leads to culture collapse and cell death, which occurs before the phage has finished its replication cycle, thus protecting non-infected bacteria by aborting the phage infection and preventing its propagation. The sequence is that of CD-NTase-associated protein 6 from Escherichia coli (strain MS 115-1).